A 255-amino-acid polypeptide reads, in one-letter code: MAAAAAATAAAKGNGGGGGRAGAGDASGTRKKKGPGPLATAYLVIYNVVMTAGWLVIAVGLVRAYLAKGSYHSLYYSIEKPLKFFQTGALLEILHCAIGIVPSSVVLTSFQVMSRVFLIWAVTHSVKEVQSEDSVLLFVIAWTITEIIRYSFYTFSLLNHLPYLIKWARYTLFIVLYPMGVSGELLTIYAALPFVRQAGLYSISLPNKYNFSFDYYAFLILIMISYIPIFPQLYFHMIHQRRKILSHTEEHKKFE.

The Cytoplasmic portion of the chain corresponds to 3–42; it reads AAAAATAAAKGNGGGGGRAGAGDASGTRKKKGPGPLATAY. Residues 11-34 form a disordered region; sequence AKGNGGGGGRAGAGDASGTRKKKG. Gly residues predominate over residues 13–22; that stretch reads GNGGGGGRAG. The helical transmembrane segment at 43-61 threads the bilayer; the sequence is LVIYNVVMTAGWLVIAVGL. Topologically, residues 62 to 80 are lumenal; that stretch reads VRAYLAKGSYHSLYYSIEK. The helical transmembrane segment at 81–98 threads the bilayer; it reads PLKFFQTGALLEILHCAI. The Cytoplasmic portion of the chain corresponds to 99–108; that stretch reads GIVPSSVVLT. Residues 109–126 form a helical membrane-spanning segment; it reads SFQVMSRVFLIWAVTHSV. Over 127 to 131 the chain is Lumenal; the sequence is KEVQS. The chain crosses the membrane as a helical span at residues 132–147; sequence EDSVLLFVIAWTITEI. At 148 to 170 the chain is on the cytoplasmic side; sequence IRYSFYTFSLLNHLPYLIKWARY. A helical membrane pass occupies residues 171–188; it reads TLFIVLYPMGVSGELLTI. Catalysis depends on residues Y177 and E184. The Lumenal portion of the chain corresponds to 189-218; it reads YAALPFVRQAGLYSISLPNKYNFSFDYYAF. The tract at residues 199–215 is may be involved in interaction with TECR; the sequence is GLYSISLPNKYNFSFDY. N210 is a glycosylation site (N-linked (GlcNAc...) asparagine). Residues 219 to 236 form a helical membrane-spanning segment; sequence LILIMISYIPIFPQLYFH. Residues 237-255 lie on the Cytoplasmic side of the membrane; that stretch reads MIHQRRKILSHTEEHKKFE.

This sequence belongs to the very long-chain fatty acids dehydratase HACD family. As to quaternary structure, may interact with enzymes of the ELO family (including ELOVL1); with those enzymes that mediate condensation, the first of the four steps of the reaction cycle responsible for fatty acids elongation, may be part of a larger fatty acids elongase complex. Interacts with BCAP31. Interacts (via the third lumenal loop) with TECR.

The protein resides in the endoplasmic reticulum membrane. It carries out the reaction a very-long-chain (3R)-3-hydroxyacyl-CoA = a very-long-chain (2E)-enoyl-CoA + H2O. It catalyses the reaction (3R)-hydroxyhexadecanoyl-CoA = (2E)-hexadecenoyl-CoA + H2O. The enzyme catalyses (3R)-hydroxyoctadecanoyl-CoA = (2E)-octadecenoyl-CoA + H2O. The catalysed reaction is (3R)-hydroxyeicosanoyl-CoA = (2E)-eicosenoyl-CoA + H2O. It carries out the reaction (3R)-hydroxydocosanoyl-CoA = (2E)-docosenoyl-CoA + H2O. It catalyses the reaction (3R)-hydroxytetracosanoyl-CoA = (2E)-tetracosenoyl-CoA + H2O. The enzyme catalyses (3R)-hydroxyhexacosanoyl-CoA = (2E)-hexacosenoyl-CoA + H2O. The protein operates within lipid metabolism; fatty acid biosynthesis. Catalyzes the third of the very long-chain fatty acids (VLCFA) elongation four-step cycle (condensation, reduction, dehydration, and reduction). This endoplasmic reticulum-elongation process is characterized by the addition of two carbons to the lipid chain through each cycle. This enzyme catalyzes the dehydration of the 3-hydroxyacyl-CoA intermediate into trans-2,3-enoyl-CoA, within each cycle of elongation. Therefore, it participates in the production of various VLCFAs involved in multiple biological processes as precursors of membrane lipids and lipid mediators. This Pongo abelii (Sumatran orangutan) protein is Very-long-chain (3R)-3-hydroxyacyl-CoA dehydratase 2.